A 240-amino-acid chain; its full sequence is C-type lectin domain family 4 member A (240 aa).

The Cytoplasmic portion of the chain corresponds to 1–48 (MASEITYAEVRIKNESNSSVTYSGSPAAPREKPTRHLSKPGSLLVPFT). The ITIM motif signature appears at 5–10 (ITYAEV). The disordered stretch occupies residues 18 to 38 (SSVTYSGSPAAPREKPTRHLS). The chain crosses the membrane as a helical; Signal-anchor for type II membrane protein span at residues 49-69 (SLMVLLLLLAITFLVAFIIYF). Topologically, residues 70-240 (QKYSQFLEEK…SVCQMKKIQL (171 aa)) are extracellular. Intrachain disulfides connect C107/C118, C140/C233, and C208/C225. In terms of domain architecture, C-type lectin spans 129-235 (SKASWSESEK…SGKQQSVCQM (107 aa)). V149 and E155 together coordinate Ca(2+). An N-linked (GlcNAc...) asparagine glycan is attached at N190. Ca(2+) is bound by residues E200, S202, and E206. Alpha-D-mannopyranose is bound by residues 200–202 (EPS) and E206. 211 to 213 (INH) serves as a coordination point for N-acetyl-D-glucosamine. Residues N221 and D222 each coordinate Ca(2+).

In terms of assembly, may interact with PTPN6 via its ITIM site. Expressed by myeloid cells (dendritic cells, macrophages, and neutrophils) and B-cells.

The protein localises to the cell membrane. Its function is as follows. C-type lectin receptor that binds carbohydrates mannose and fucose but also weakly interacts with N-acetylglucosamine (GlcNAc) in a Ca(2+)-dependent manner. Involved in regulating immune reactivity. Once triggered by antigen, it is internalized by clathrin-dependent endocytosis and delivers its antigenic cargo into the antigen presentation pathway resulting in cross-priming of CD8(+) T cells. This cross-presentation and cross-priming are enhanced by TLR7 and TLR8 agonists with increased expansion of the CD8(+) T cells, high production of IFNG and TNF with reduced levels of IL4, IL5 and IL13. In plasmacytoid dendritic cells, inhibits TLR9-mediated IFNA and TNF production. May be involved via its ITIM motif (immunoreceptor tyrosine-based inhibitory motifs) in the inhibition of B-cell-receptor-mediated calcium mobilization and protein tyrosine phosphorylation. This is C-type lectin domain family 4 member A (Clec4a) from Rattus norvegicus (Rat).